Reading from the N-terminus, the 852-residue chain is Tiger protein I3 (852 aa).

Residues 1–18 (MKILLFFILFYLFSFSIS) form the signal peptide. The Extracellular portion of the chain corresponds to 19–830 (YDEVIPLGYE…DVHQYSDARN (812 aa)). Asn31, Asn47, Asn67, Asn97, Asn129, Asn201, Asn215, Asn228, Asn260, Asn323, Asn352, Asn356, Asn404, Asn441, Asn476, Asn483, Asn501, Asn512, Asn574, Asn592, Asn635, Asn658, Asn661, Asn679, Asn680, Asn723, Asn757, Asn761, Asn773, Asn785, and Asn800 each carry an N-linked (GlcNAc...) asparagine glycan. The 78-residue stretch at 290–367 (IPSIVNSIPK…SSPIAVSIND (78 aa)) folds into the IPT/TIG domain. Residues 831-851 (IFQNLLLSILIIIIISLFISN) form a helical membrane-spanning segment. Position 852 (Ile852) is a topological domain, cytoplasmic.

It localises to the membrane. The protein is Tiger protein I3 (tgrI3) of Dictyostelium discoideum (Social amoeba).